A 499-amino-acid chain; its full sequence is Maturase K (499 aa).

This sequence belongs to the intron maturase 2 family. MatK subfamily.

Its subcellular location is the plastid. The protein resides in the chloroplast. Usually encoded in the trnK tRNA gene intron. Probably assists in splicing its own and other chloroplast group II introns. In Camellia sasanqua (Christmas camellia), this protein is Maturase K.